The primary structure comprises 120 residues: MDVKMTIAIRGDLKISCGKAAAQAGHAAVECVLAAMGDAKWRKWLDQWLEEGQKKIVLTADDAAHLYQLHERAKSLGLPTAVVIDAGLTELPPGTPTAICVGPAPDELVDKVTGSLKLYK.

This sequence belongs to the PTH2 family.

It is found in the cytoplasm. The enzyme catalyses an N-acyl-L-alpha-aminoacyl-tRNA + H2O = an N-acyl-L-amino acid + a tRNA + H(+). The natural substrate for this enzyme may be peptidyl-tRNAs which drop off the ribosome during protein synthesis. The chain is Peptidyl-tRNA hydrolase from Pyrobaculum aerophilum (strain ATCC 51768 / DSM 7523 / JCM 9630 / CIP 104966 / NBRC 100827 / IM2).